The primary structure comprises 798 residues: Peroxisome proliferator-activated receptor gamma coactivator 1-alpha (798 aa).

Position 79 is an N6-acetyllysine (K79). The disordered stretch occupies residues 100-140; that stretch reads PVDEDGLPSFDALTDGDVTTDNEASPSSMPDGTPPPQEAEE. Polar residues predominate over residues 116–129; sequence DVTTDNEASPSSMP. Residues 144 to 148 carry the LXXLL motif motif; that stretch reads LKKLL. K146 is subject to N6-acetyllysine. Phosphothreonine; by AMPK is present on T178. K184 carries the post-translational modification N6-acetyllysine. Residues 213 to 277 form a disordered region; the sequence is YLTTNDDPPH…NDPKGSPFEN (65 aa). Positions 219 to 237 are enriched in basic and acidic residues; the sequence is DPPHTKPTENRNSSRDKCT. An N6-acetyllysine mark is found at K254, K271, K278, and K321. The tract at residues 290-351 is disordered; sequence GTAGLTPPTT…NNSTKKGPEQ (62 aa). Positions 293 to 339 are interaction with PPARG; sequence GLTPPTTPPHKANQDNPFRASPKLKSSCKTVVPPPSKKPRYSESSGT. Polar residues predominate over residues 334 to 346; that stretch reads SESSGTQGNNSTK. K347, K413, K442, and K451 each carry N6-acetyllysine. The segment at 350-798 is mediates interaction with RNF34; the sequence is EQSELYAQLS…LKEAQRSLRR (449 aa). Phosphoserine; by AMPK is present on S539. 3 disordered regions span residues 542-599, 613-639, and 650-669; these read SFNS…SSRS, HRNS…SYEE, and YRRE…ERQR. The segment covering 563–578 has biased composition (basic residues); the sequence is QRMRSRSRSFSRHRSC. The span at 579–599 shows a compositional bias: low complexity; sequence SRSPYSRSRSRSPGSRSSSRS. Residues 622–631 show a composition bias toward basic residues; it reads SRSRSPYSRR. The RRM domain occupies 677 to 753; the sequence is RVIYVGKIRP…TDFELYFCGR (77 aa). An N6-acetyllysine mark is found at K758 and K779.

As to quaternary structure, homooligomer. Interacts with MYBBP1A; inhibits MYBBP1A transcriptional activation. Interacts with PRDM16, LPIN1 and PML. Interacts (via LXXLL motif) with RORA and RORC (via AF-2 motif); activates RORA and RORC transcriptional activation. Interacts with LRPPRC. Interacts with FOXO1. Interacts with NR5A2. Post-translationally, phosphorylation by AMPK in skeletal muscle increases activation of its own promoter. Phosphorylated by CLK2. Heavily acetylated by KAT2A/GCN5 under conditions of high nutrients, leading to inactivation of PPARGC1A. Deacetylated by SIRT1 in low nutrients/high NAD conditions, leading to its activation. In terms of processing, ubiquitinated. Ubiquitination by RNF34 induces proteasomal degradation. In terms of tissue distribution, heart, skeletal muscle, liver and kidney. Expressed at lower levels in brain and pancreas and at very low levels in the intestine and white adipose tissue. In skeletal muscle, levels were lower in obese than in lean subjects and fasting induced a 2-fold increase in levels in the skeletal muscle in obese subjects.

The protein resides in the nucleus. The protein localises to the PML body. It localises to the cytoplasm. Functionally, transcriptional coactivator for steroid receptors and nuclear receptors. Greatly increases the transcriptional activity of PPARG and thyroid hormone receptor on the uncoupling protein promoter. Can regulate key mitochondrial genes that contribute to the program of adaptive thermogenesis. Plays an essential role in metabolic reprogramming in response to dietary availability through coordination of the expression of a wide array of genes involved in glucose and fatty acid metabolism. Acts as a key regulator of gluconeogenesis: stimulates hepatic gluconeogenesis by increasing the expression of gluconeogenic enzymes, and acting together with FOXO1 to promote the fasting gluconeogenic program. Induces the expression of PERM1 in the skeletal muscle in an ESRRA-dependent manner. Also involved in the integration of the circadian rhythms and energy metabolism. Required for oscillatory expression of clock genes, such as BMAL1 and NR1D1, through the coactivation of RORA and RORC, and metabolic genes, such as PDK4 and PEPCK. The protein is Peroxisome proliferator-activated receptor gamma coactivator 1-alpha (PPARGC1A) of Homo sapiens (Human).